We begin with the raw amino-acid sequence, 164 residues long: Deoxyuridine 5'-triphosphate nucleotidohydrolase (164 aa).

Residues 66–68, N79, 83–85, and K93 contribute to the substrate site; these read RSG and TVD.

The protein belongs to the dUTPase family. Requires Mg(2+) as cofactor.

The catalysed reaction is dUTP + H2O = dUMP + diphosphate + H(+). It participates in pyrimidine metabolism; dUMP biosynthesis; dUMP from dCTP (dUTP route): step 2/2. Its function is as follows. This enzyme is involved in nucleotide metabolism: it produces dUMP, the immediate precursor of thymidine nucleotides and it decreases the intracellular concentration of dUTP so that uracil cannot be incorporated into DNA. This is Deoxyuridine 5'-triphosphate nucleotidohydrolase from Rhodococcus erythropolis (strain PR4 / NBRC 100887).